A 283-amino-acid chain; its full sequence is ATP phosphoribosyltransferase (283 aa).

The protein belongs to the ATP phosphoribosyltransferase family. Long subfamily. Requires Mg(2+) as cofactor.

Its subcellular location is the cytoplasm. It carries out the reaction 1-(5-phospho-beta-D-ribosyl)-ATP + diphosphate = 5-phospho-alpha-D-ribose 1-diphosphate + ATP. It functions in the pathway amino-acid biosynthesis; L-histidine biosynthesis; L-histidine from 5-phospho-alpha-D-ribose 1-diphosphate: step 1/9. With respect to regulation, feedback inhibited by histidine. In terms of biological role, catalyzes the condensation of ATP and 5-phosphoribose 1-diphosphate to form N'-(5'-phosphoribosyl)-ATP (PR-ATP). Has a crucial role in the pathway because the rate of histidine biosynthesis seems to be controlled primarily by regulation of HisG enzymatic activity. The sequence is that of ATP phosphoribosyltransferase from Salinibacter ruber (strain DSM 13855 / M31).